The primary structure comprises 288 residues: HTH-type transcriptional regulator YofA (288 aa).

The HTH lysR-type domain maps to 1-58 (MESGDLKIFQAVARKGSISKAAESLHYVQSNVTNRIQQLERQLQTQLFYRTNRGMTLT). The segment at residues 18 to 37 (ISKAAESLHYVQSNVTNRIQ) is a DNA-binding region (H-T-H motif).

This sequence belongs to the LysR transcriptional regulatory family.

The protein localises to the cytoplasm. Functionally, regulates expression of the cell division protein ftsW, and is essential for cell viability during stationary phase. The sequence is that of HTH-type transcriptional regulator YofA (yofA) from Bacillus velezensis (strain DSM 23117 / BGSC 10A6 / LMG 26770 / FZB42) (Bacillus amyloliquefaciens subsp. plantarum).